The chain runs to 223 residues: uncharacterized protein (223 aa).

Positions 1-17 (MLGQGLIFISLAFVAHA) are cleaved as a signal peptide. The N-linked (GlcNAc...) asparagine glycan is linked to Asn-58. A disordered region spans residues 149–188 (VRKKGSRPSKPQKEKQGNKQGSKTEESPNVDEDELESEPE). Residues 159–174 (PQKEKQGNKQGSKTEE) show a composition bias toward basic and acidic residues. Residues 176–187 (PNVDEDELESEP) show a composition bias toward acidic residues. Residues 191–211 (TFFQKYGLYLIPILFLIIMSG) traverse the membrane as a helical segment.

It localises to the endoplasmic reticulum membrane. This is an uncharacterized protein from Schizosaccharomyces pombe (strain 972 / ATCC 24843) (Fission yeast).